The primary structure comprises 1004 residues: Cadmium/zinc-transporting ATPase HMA3 (1004 aa).

The HMA domain maps to 42 to 108 (KKTYLDVLGV…ALNKAGLEAS (67 aa)). The next 8 helical transmembrane spans lie at 120–140 (RWPS…FFEW), 144–164 (PLQC…VRRG), 171–191 (LSLD…CLGD), 193–213 (TEAG…TLAC), 340–360 (CAKY…LIPA), 371–391 (WKLA…LSTP), 683–703 (IAVN…LAAA), and 707–727 (VLWA…LNSM). A disordered region spans residues 931–952 (TGCGASKRSPPAEGSCSGGEGG).

This sequence belongs to the cation transport ATPase (P-type) (TC 3.A.3) family. Type IB subfamily. As to expression, specifically expressed in roots.

Its subcellular location is the vacuole membrane. The enzyme catalyses Zn(2+)(in) + ATP + H2O = Zn(2+)(out) + ADP + phosphate + H(+). It carries out the reaction Cd(2+)(in) + ATP + H2O = Cd(2+)(out) + ADP + phosphate + H(+). Its function is as follows. Root-specific cadmium (Cd) transporter that mediates Cd efflux in root vacuoles. Involved in Cd detoxification by sequestrating Cd into root vacuoles and limiting translocation of Cd from the roots to the shoots, and accumulation in grains. This Oryza sativa subsp. japonica (Rice) protein is Cadmium/zinc-transporting ATPase HMA3.